Consider the following 291-residue polypeptide: Light-independent protochlorophyllide reductase iron-sulfur ATP-binding protein (291 aa).

ATP contacts are provided by residues 10–15 (GIGKST) and K39. S14 contributes to the Mg(2+) binding site. [4Fe-4S] cluster is bound by residues C95 and C129. 180–181 (NR) contacts ATP.

Belongs to the NifH/BchL/ChlL family. In terms of assembly, homodimer. Protochlorophyllide reductase is composed of three subunits; ChlL, ChlN and ChlB. Requires [4Fe-4S] cluster as cofactor.

It localises to the plastid. Its subcellular location is the chloroplast. The catalysed reaction is chlorophyllide a + oxidized 2[4Fe-4S]-[ferredoxin] + 2 ADP + 2 phosphate = protochlorophyllide a + reduced 2[4Fe-4S]-[ferredoxin] + 2 ATP + 2 H2O. It participates in porphyrin-containing compound metabolism; chlorophyll biosynthesis (light-independent). Component of the dark-operative protochlorophyllide reductase (DPOR) that uses Mg-ATP and reduced ferredoxin to reduce ring D of protochlorophyllide (Pchlide) to form chlorophyllide a (Chlide). This reaction is light-independent. The L component serves as a unique electron donor to the NB-component of the complex, and binds Mg-ATP. The polypeptide is Light-independent protochlorophyllide reductase iron-sulfur ATP-binding protein (Larix decidua (European larch)).